Here is a 199-residue protein sequence, read N- to C-terminus: NAD(P)H dehydrogenase (quinone) (199 aa).

A Flavodoxin-like domain is found at 4-190; it reads MLVLYYSAYG…DGARFQGRRV (187 aa). FMN is bound by residues 10–15 and 78–80; these read SAYGYM and TRY. Tyr-12 serves as a coordination point for NAD(+). Position 98 (Trp-98) interacts with substrate. Residues 113–119 and His-134 each bind FMN; that span reads STATQHG. The tract at residues 158-181 is disordered; it reads GAPYGMTTTADGDGSRQPSAQELD. The segment covering 163-177 has biased composition (polar residues); that stretch reads MTTTADGDGSRQPSA.

Belongs to the WrbA family. The cofactor is FMN.

It catalyses the reaction a quinone + NADH + H(+) = a quinol + NAD(+). The enzyme catalyses a quinone + NADPH + H(+) = a quinol + NADP(+). This Brucella abortus (strain S19) protein is NAD(P)H dehydrogenase (quinone).